The primary structure comprises 787 residues: Protein translocase subunit SecA (787 aa).

Residues Gln85, 103 to 107, and Asp492 contribute to the ATP site; that span reads GEGKT.

This sequence belongs to the SecA family. As to quaternary structure, monomer and homodimer. Part of the essential Sec protein translocation apparatus which comprises SecA, SecYEG and auxiliary proteins SecDF. Other proteins may also be involved.

The protein localises to the cell membrane. The protein resides in the cytoplasm. It carries out the reaction ATP + H2O + cellular proteinSide 1 = ADP + phosphate + cellular proteinSide 2.. Part of the Sec protein translocase complex. Interacts with the SecYEG preprotein conducting channel. Has a central role in coupling the hydrolysis of ATP to the transfer of proteins into and across the cell membrane, serving as an ATP-driven molecular motor driving the stepwise translocation of polypeptide chains across the membrane. The polypeptide is Protein translocase subunit SecA (Lacticaseibacillus casei (strain BL23) (Lactobacillus casei)).